The primary structure comprises 246 residues: Bidirectional sugar transporter SWEET3a (246 aa).

The Extracellular segment spans residues methionine 1–arginine 6. A helical membrane pass occupies residues phenylalanine 7–threonine 27. Residues phenylalanine 7 to arginine 96 enclose the MtN3/slv 1 domain. The Cytoplasmic segment spans residues phenylalanine 28 to cysteine 42. Residues isoleucine 43 to valine 63 traverse the membrane as a helical segment. Over serine 64 to serine 74 the chain is Extracellular. Asparagine 69 carries an N-linked (GlcNAc...) asparagine glycan. The chain crosses the membrane as a helical span at residues isoleucine 75–proline 95. Residues arginine 96 to glutamine 101 are Cytoplasmic-facing. A helical transmembrane segment spans residues valine 102–phenylalanine 122. At serine 123–lysine 131 the chain is on the extracellular side. A helical transmembrane segment spans residues valine 132 to alanine 152. Positions phenylalanine 133–lysine 217 constitute a MtN3/slv 2 domain. At methionine 153–proline 166 the chain is on the cytoplasmic side. The chain crosses the membrane as a helical span at residues phenylalanine 167–glycine 187. Over arginine 188–phenylalanine 191 the chain is Extracellular. Residues isoleucine 192 to isoleucine 212 form a helical membrane-spanning segment. At tyrosine 213–proline 246 the chain is on the cytoplasmic side.

The protein belongs to the SWEET sugar transporter family. In terms of assembly, forms homooligomers and/or heterooligomers.

The protein resides in the cell membrane. Functionally, mediates both low-affinity uptake and efflux of sugar across the plasma membrane. The protein is Bidirectional sugar transporter SWEET3a (SWEET3A) of Oryza sativa subsp. japonica (Rice).